A 591-amino-acid polypeptide reads, in one-letter code: Aspartate--tRNA(Asp/Asn) ligase (591 aa).

Glu-174 lines the L-aspartate pocket. Residues 198-201 (QLFK) form an aspartate region. Arg-220 serves as a coordination point for L-aspartate. ATP-binding positions include 220-222 (RDE) and Gln-229. L-aspartate is bound at residue His-450. Glu-483 provides a ligand contact to ATP. Arg-490 contacts L-aspartate. Position 535–538 (535–538 (GLDR)) interacts with ATP.

The protein belongs to the class-II aminoacyl-tRNA synthetase family. Type 1 subfamily. In terms of assembly, homodimer.

It is found in the cytoplasm. The catalysed reaction is tRNA(Asx) + L-aspartate + ATP = L-aspartyl-tRNA(Asx) + AMP + diphosphate. Its function is as follows. Aspartyl-tRNA synthetase with relaxed tRNA specificity since it is able to aspartylate not only its cognate tRNA(Asp) but also tRNA(Asn). Reaction proceeds in two steps: L-aspartate is first activated by ATP to form Asp-AMP and then transferred to the acceptor end of tRNA(Asp/Asn). This is Aspartate--tRNA(Asp/Asn) ligase from Azotobacter vinelandii (strain DJ / ATCC BAA-1303).